Here is a 346-residue protein sequence, read N- to C-terminus: Cell division protein FtsZ 2 (346 aa).

GTP contacts are provided by residues 23–27 (GGGGN), 110–112 (GTG), Glu-141, Arg-145, and Asp-189. The segment at 320–346 (SNRSAQPTAPEAMNGQTAAAVPSRTLQ) is disordered.

It belongs to the FtsZ family. In terms of assembly, homodimer. Polymerizes to form a dynamic ring structure in a strictly GTP-dependent manner. Interacts directly with several other division proteins.

The protein resides in the cytoplasm. In terms of biological role, essential cell division protein that forms a contractile ring structure (Z ring) at the future cell division site. The regulation of the ring assembly controls the timing and the location of cell division. One of the functions of the FtsZ ring is to recruit other cell division proteins to the septum to produce a new cell wall between the dividing cells. Binds GTP and shows GTPase activity. This Rhizobium meliloti (strain 1021) (Ensifer meliloti) protein is Cell division protein FtsZ 2.